The sequence spans 612 residues: Zinc metalloproteinase-disintegrin-like berythractivase (612 aa).

The signal sequence occupies residues 1 to 20; it reads MIQVLLVIICLEAFPYQGSS. The propeptide occupies 21 to 187; that stretch reads IILESGNVND…EPIKKASLLN (167 aa). Positions 200–396 constitute a Peptidase M12B domain; the sequence is KYVEFVVVLD…NRPQCLLNKP (197 aa). Glu-203 provides a ligand contact to Ca(2+). The N-linked (GlcNAc...) asparagine glycan is linked to Asn-260. Position 287 (Asp-287) interacts with Ca(2+). 3 cysteine pairs are disulfide-bonded: Cys-311–Cys-391, Cys-351–Cys-375, and Cys-353–Cys-358. His-336 contributes to the Zn(2+) binding site. Residue Glu-337 is part of the active site. Residues His-340 and His-346 each coordinate Zn(2+). N-linked (GlcNAc...) asparagine glycosylation is present at Asn-348. Asn-374 is a glycosylation site (N-linked (GlcNAc...) asparagine). Cys-391, Asn-394, Val-406, Asn-409, Leu-411, Glu-413, Glu-416, and Asp-419 together coordinate Ca(2+). Residues 404-490 enclose the Disintegrin domain; that stretch reads PPVCGNELLE…DCPMDDFQRN (87 aa). Disulfide bonds link Cys-407–Cys-436, Cys-418–Cys-431, Cys-420–Cys-426, Cys-430–Cys-453, Cys-444–Cys-450, Cys-449–Cys-475, Cys-462–Cys-482, Cys-469–Cys-501, Cys-494–Cys-506, Cys-513–Cys-563, Cys-528–Cys-574, Cys-541–Cys-551, Cys-558–Cys-600, and Cys-594–Cys-605. Residue Asn-432 is glycosylated (N-linked (GlcNAc...) asparagine). The short motif at 468-470 is the D/ECD-tripeptide element; it reads DCD. Asp-470, Leu-471, Glu-473, and Asp-485 together coordinate Ca(2+).

The protein belongs to the venom metalloproteinase (M12B) family. P-III subfamily. P-IIIa sub-subfamily. As to quaternary structure, monomer. Zn(2+) is required as a cofactor. Post-translationally, highly glycosylated. Expressed by the venom gland.

It is found in the secreted. With respect to regulation, inhibited by EDTA and o-phenanthroline. Not inhibited by PMSF, benzamidine, irreversible serine-proteinase inhibitors and cysteine proteinase inhibitor E-64. Functionally, potent activator of prothrombin (F2). Does not elicit any hemorrhagic response. Barely inhibits collagen-induced platelet aggregation. Binds neither collagen, nor the jararhagin monoclonal antibody MAJar3. Hydrolyzes the Aalpha-chain of fibrin and fibrinogen, without affecting the Bbeta- and gamma-chains. Is capable of triggering endothelial pro-inflammatory and procoagulant cell responses, but fails to trigger apoptosis. Induces von Willebrand factor release, and the expression of both ICAM1 and E-selectin (SELE) (without increase in VCAM1) in endothelial cells (HUVEC). Is also able to up-regulate the synthesis of the coagulation factor TF (F3). Enhances nitric oxide (NO) generation, prostacyclin production and interleukin-8 release. The polypeptide is Zinc metalloproteinase-disintegrin-like berythractivase (Bothrops erythromelas (Caatinga lance head)).